The chain runs to 463 residues: MVKDMETIVSLAKHRGFVFPGSDIYGGLSNTWDYGPLGVELKNNVKKAWWQKFITQSPFNVGIDAAILMNPKTWEASGHLGNFNDPMIDNKDSKIRYRADKLIEDYMQKEKGDENFIADGLSFDEMKRIIDDEGIVCPVSGTANWTDIRQFNLMFKTFQGVTEDSTNEIFLRPETAQGIFVNYKNVQRSMRKKLPFGIGQIGKSFRNEITPGNFIFRTREFEQMELEFFCKPGEEIEWQNYWKTFASQWLKDLNINEENMRLRDHDEEELSHYSNATTDIEYRFPFGWGELWGIASRTDFDLKKHSEHSGEDFKYHDPETNEKYVPYCIEPSLGADRVTLAFLCDAYEEEGVEGSKDARTVMHFHPALAPYKAAVLPLSKKLSEEAIKIFEQLSSKFAIDFDESQSIGKRYRRQDEIGTPYCITFDFDSLEDNQVTVRDRDSMEQVRMPISELETFLAEKVAF.

2 residues coordinate substrate: Arg98 and Glu174. Residues 206-208, 216-221, 290-291, and 334-337 each bind ATP; these read RNE, FRTREF, EL, and GADR. 221–225 is a substrate binding site; that stretch reads FEQME. 330–334 is a binding site for substrate; the sequence is EPSLG.

This sequence belongs to the class-II aminoacyl-tRNA synthetase family. In terms of assembly, homodimer.

Its subcellular location is the cytoplasm. The catalysed reaction is tRNA(Gly) + glycine + ATP = glycyl-tRNA(Gly) + AMP + diphosphate. Its function is as follows. Catalyzes the attachment of glycine to tRNA(Gly). In Staphylococcus haemolyticus (strain JCSC1435), this protein is Glycine--tRNA ligase.